The following is a 47-amino-acid chain: Protein YqgG (47 aa).

The chain is Protein YqgG from Escherichia coli (strain K12).